The sequence spans 594 residues: Chondroitin sulfate proteoglycan 5 (594 aa).

A compositionally biased stretch (polar residues) spans 1–12 (MGVGGTSASDTA). Positions 1–18 (MGVGGTSASDTALSLCPT) are cleaved as a signal peptide. 2 disordered regions span residues 1 to 325 (MGVG…PWGL) and 343 to 418 (TTSF…SECR). The Extracellular segment spans residues 19–481 (APEWPPRNGS…AIVTDFQVLC (463 aa)). 2 N-linked (GlcNAc...) asparagine glycosylation sites follow: Asn-26 and Asn-44. The span at 140 to 181 (SPGLGLSSPGPNLGLPSLDLPNPNLGLPDPNLGLPNPSLGLP) shows a compositional bias: low complexity. 2 stretches are compositionally biased toward pro residues: residues 182-195 (SPGP…PNPN) and 219-229 (IPLPSPSPGPG). Residues 248 to 259 (PQPSSSPAPAQR) are compositionally biased toward low complexity. Residues 298–310 (GGHGPGGGHGAGG) show a composition bias toward gly residues. Positions 338–377 (ADFYPTTSFYAEGDDDAEEELEEDEEEEEEEDGGLEDENG) are interaction with TNC and TNR. Over residues 349-375 (EGDDDAEEELEEDEEEEEEEDGGLEDE) the composition is skewed to acidic residues. 2 N-linked (GlcNAc...) asparagine glycosylation sites follow: Asn-413 and Asn-425. The EGF-like domain maps to 429-471 (RSVCDLVPSYCHNGGQCYLVESHGAFCRCNTQDYTWHKGTRCE). 3 cysteine pairs are disulfide-bonded: Cys-432/Cys-445, Cys-439/Cys-455, and Cys-457/Cys-470. Residues 482–502 (VAVGSAALVLLLLFMLTVFFA) traverse the membrane as a helical segment. Residues 503-594 (KKLYLLKTEN…GVPCLHNNLG (92 aa)) are Cytoplasmic-facing. The tract at residues 535 to 594 (TIAEGSHPNDDPGAPHKLQDPLKPGLKDEEPLSILSTAPEEGSKGEPGGCGVPCLHNNLG) is disordered. Residues 541-564 (HPNDDPGAPHKLQDPLKPGLKDEE) show a composition bias toward basic and acidic residues.

In terms of assembly, binds TNC and TNR. The 80 kDa form but not the 140 kDa form can bind TNC and TNR when expressed at the cell surface. In terms of processing, different forms exist: the 140 kDa form (also reported as 130 kDa), which probably consists of the entire protein, and the 38 and 80 kDa forms, which are probably cleaved in their N-terminus. Increase in synaptic activity, results in shedding of the extracellular domain and expression at the cell surface of a 38 kDa form. A form of 200 kDa has also been reported, which is probably hyperglycosylated. Post-translationally, N-glycosylated. O-glycosylated; contains chondroitin sulfate glycans. Part-time proteoglycan, the 200 kDa form is the only one containing chondroitin sulfate glycans. As to expression, expressed in astroglial and neuronal surfaces in different parts of the embryonic brain. Expressed in adult brain and retina (at protein level).

It is found in the cell membrane. Its function is as follows. May function as a growth and differentiation factor involved in neuritogenesis and more particularly in neurite extension. The protein is Chondroitin sulfate proteoglycan 5 (CSPG5) of Gallus gallus (Chicken).